The sequence spans 56 residues: PI-stichotoxin-Hcr2o (56 aa).

Residues 4–54 (CLEPKVVGPCKARIRRFYFDSETGKCTPFIYGGCGGNGNNFETLHACRAIC) enclose the BPTI/Kunitz inhibitor domain. Intrachain disulfides connect Cys4–Cys54, Cys13–Cys37, and Cys29–Cys50.

Belongs to the venom Kunitz-type family. Sea anemone type 2 potassium channel toxin subfamily.

The protein localises to the secreted. It is found in the nematocyst. Its function is as follows. This recombinant serine protease inhibitor inhibits both trypsin (Ki=21 nM) and chymotrypsin (Ki=500 nM). It possesses anti-inflammatory activity in vitro. It inhibits macrophage LPS-induced nitric oxide synthesis, and blocks histamine influence on intracellular calcium concentration in murine bone marrow-derived macrophages, which can indicate inhibition of H1-histamine receptor (HRH1). In vitro, it shows cytoprotective activity in the oxidative stress agent 6-hydroxydopamine (6-OHDA)-induced neurotoxicity model. In this model, it decreases reactive oxygen species (ROS) levels, and increases cell viability in a correlated manner. It is possible that the observed effect is due to the ability of this peptides to act as free-radical scavenger. In vivo, it shows analgesic activity, since it increases hot plate and tail flick withdrawal latencies, when using a mice thermal pain stimulation model. The protein is PI-stichotoxin-Hcr2o of Radianthus crispa (Leathery sea anemone).